A 164-amino-acid chain; its full sequence is SsrA-binding protein (164 aa).

The disordered stretch occupies residues 141-164 (KLHDKRQDEKQKSIKKEINSALKR). A compositionally biased stretch (basic and acidic residues) spans 145-158 (KRQDEKQKSIKKEI).

It belongs to the SmpB family.

It localises to the cytoplasm. Required for rescue of stalled ribosomes mediated by trans-translation. Binds to transfer-messenger RNA (tmRNA), required for stable association of tmRNA with ribosomes. tmRNA and SmpB together mimic tRNA shape, replacing the anticodon stem-loop with SmpB. tmRNA is encoded by the ssrA gene; the 2 termini fold to resemble tRNA(Ala) and it encodes a 'tag peptide', a short internal open reading frame. During trans-translation Ala-aminoacylated tmRNA acts like a tRNA, entering the A-site of stalled ribosomes, displacing the stalled mRNA. The ribosome then switches to translate the ORF on the tmRNA; the nascent peptide is terminated with the 'tag peptide' encoded by the tmRNA and targeted for degradation. The ribosome is freed to recommence translation, which seems to be the essential function of trans-translation. The protein is SsrA-binding protein of Prochlorococcus marinus (strain AS9601).